A 216-amino-acid chain; its full sequence is ATP phosphoribosyltransferase (216 aa).

Belongs to the ATP phosphoribosyltransferase family. Short subfamily. Heteromultimer composed of HisG and HisZ subunits.

It is found in the cytoplasm. It carries out the reaction 1-(5-phospho-beta-D-ribosyl)-ATP + diphosphate = 5-phospho-alpha-D-ribose 1-diphosphate + ATP. It functions in the pathway amino-acid biosynthesis; L-histidine biosynthesis; L-histidine from 5-phospho-alpha-D-ribose 1-diphosphate: step 1/9. In terms of biological role, catalyzes the condensation of ATP and 5-phosphoribose 1-diphosphate to form N'-(5'-phosphoribosyl)-ATP (PR-ATP). Has a crucial role in the pathway because the rate of histidine biosynthesis seems to be controlled primarily by regulation of HisG enzymatic activity. This chain is ATP phosphoribosyltransferase, found in Rubrobacter xylanophilus (strain DSM 9941 / JCM 11954 / NBRC 16129 / PRD-1).